Consider the following 83-residue polypeptide: Putative beta-neurotoxin RjAa12f (83 aa).

Residues 1-18 (MKILIFIIASFMLIGVEC) form the signal peptide. The 64-residue stretch at 19–82 (KEGYPMGRDG…VWDSSTNKCG (64 aa)) folds into the LCN-type CS-alpha/beta domain. 4 disulfides stabilise this stretch: cysteine 29–cysteine 81, cysteine 33–cysteine 55, cysteine 40–cysteine 62, and cysteine 44–cysteine 64. Residue glycine 83 is a propeptide.

Contains 4 disulfide bonds. Expressed by the venom gland.

The protein resides in the secreted. Functionally, beta toxins bind voltage-independently at site-4 of sodium channels (Nav) and shift the voltage of activation toward more negative potentials thereby affecting sodium channel activation and promoting spontaneous and repetitive firing. This toxin is lethal to insects (A.domestica). It is not toxic to mice and does not affect mammal F11 sodium channels. The sequence is that of Putative beta-neurotoxin RjAa12f from Rhopalurus junceus (Caribbean blue scorpion).